A 368-amino-acid chain; its full sequence is 4-hydroxy-3-methylbut-2-en-1-yl diphosphate synthase (flavodoxin) (368 aa).

[4Fe-4S] cluster contacts are provided by cysteine 268, cysteine 271, cysteine 303, and glutamate 310.

This sequence belongs to the IspG family. It depends on [4Fe-4S] cluster as a cofactor.

It catalyses the reaction (2E)-4-hydroxy-3-methylbut-2-enyl diphosphate + oxidized [flavodoxin] + H2O + 2 H(+) = 2-C-methyl-D-erythritol 2,4-cyclic diphosphate + reduced [flavodoxin]. The protein operates within isoprenoid biosynthesis; isopentenyl diphosphate biosynthesis via DXP pathway; isopentenyl diphosphate from 1-deoxy-D-xylulose 5-phosphate: step 5/6. Functionally, converts 2C-methyl-D-erythritol 2,4-cyclodiphosphate (ME-2,4cPP) into 1-hydroxy-2-methyl-2-(E)-butenyl 4-diphosphate. The protein is 4-hydroxy-3-methylbut-2-en-1-yl diphosphate synthase (flavodoxin) of Listeria monocytogenes serotype 4b (strain CLIP80459).